Consider the following 1250-residue polypeptide: Protein SSD1 (1250 aa).

Polar residues predominate over residues 1 to 22 (MSKNSNVNNNRSQEPNNMFVQT). Residues 1 to 32 (MSKNSNVNNNRSQEPNNMFVQTTGGGKNAPKQ) form a disordered region. Serine 2 bears the N-acetylserine mark. Serine 40 carries the phosphoserine modification. Residues 79-163 (TGQYLSGNSG…SSIYGHSRRH (85 aa)) form a disordered region. The segment covering 84–94 (SGNSGSNNHFT) has biased composition (polar residues). The span at 124-145 (NNSGYYHNSYDNNNNSNNPGSN) shows a compositional bias: low complexity. 2 positions are modified to phosphoserine: serine 164 and serine 183. Over residues 197–208 (QADSGSNSTTEQ) the composition is skewed to polar residues. 3 disordered regions span residues 197-338 (QADS…GGRK), 418-443 (KEKE…SSDD), and 455-517 (SNNF…DDVE). Phosphothreonine is present on threonine 227. Over residues 264–276 (NEYSPGINSNWRN) the composition is skewed to polar residues. Residues 277–287 (QSQQPQQQLSP) show a composition bias toward low complexity. A phosphoserine mark is found at serine 286 and serine 322. Over residues 319-329 (SNSSVHSFSSQ) the composition is skewed to polar residues. Polar residues predominate over residues 481–495 (STINNDSDSLSSPTK). 2 positions are modified to phosphoserine: serine 491 and serine 492. Basic residues predominate over residues 497–510 (GVRRRSSLKQRPTQ). The region spanning 582–657 (AWFKPTDKKV…EIDSILRDNN (76 aa)) is the CSD2 domain. Tyrosine 688 carries the phosphotyrosine modification. The RNB domain occupies 694–1015 (DTNEYNIFAI…VHRQLKAVIH (322 aa)). The 85-residue stretch at 1064–1148 (GQLLTMATVL…SIKNKFRSTA (85 aa)) folds into the DIS3L2 C-terminal domain.

The protein belongs to the RNR ribonuclease family.

Its function is as follows. Can suppress the lethality due to deletion of SIT4, and partially the defects due to BCY1 disruption. Is implicated in the control of the cell cycle G1 phase. This Saccharomyces cerevisiae (strain ATCC 204508 / S288c) (Baker's yeast) protein is Protein SSD1 (SSD1).